The chain runs to 92 residues: Cell division protein FtsB (92 aa).

Over 1–3 (MRF) the chain is Cytoplasmic. A helical transmembrane segment spans residues 4-21 (FQVGLLCLALFVQYRLWF). Residues 22 to 92 (GHNGVQDYTR…TFIRVLPAQQ (71 aa)) lie on the Periplasmic side of the membrane. The stretch at 40-73 (LQTNEKLIKRNKVLTADIEDLKLGHEGIEERARN) forms a coiled coil.

Belongs to the FtsB family. Part of a complex composed of FtsB, FtsL and FtsQ.

It is found in the cell inner membrane. Functionally, essential cell division protein. May link together the upstream cell division proteins, which are predominantly cytoplasmic, with the downstream cell division proteins, which are predominantly periplasmic. The protein is Cell division protein FtsB of Pseudoalteromonas translucida (strain TAC 125).